Consider the following 449-residue polypeptide: Probable pectate lyase P59 (449 aa).

An N-terminal signal peptide occupies residues 1 to 22 (MGGPKIKYSFLFLCITFATIIP). N56, N80, and N81 each carry an N-linked (GlcNAc...) asparagine glycan. Ca(2+) is bound by residues D245, D269, and D273. R325 is an active-site residue.

Belongs to the polysaccharide lyase 1 family. Requires Ca(2+) as cofactor. As to expression, expressed in anthers and pollen.

It catalyses the reaction Eliminative cleavage of (1-&gt;4)-alpha-D-galacturonan to give oligosaccharides with 4-deoxy-alpha-D-galact-4-enuronosyl groups at their non-reducing ends.. The protein operates within glycan metabolism; pectin degradation; 2-dehydro-3-deoxy-D-gluconate from pectin: step 2/5. Might be needed during pollen development and tube growth. This Solanum lycopersicum (Tomato) protein is Probable pectate lyase P59 (LAT59).